The following is a 298-amino-acid chain: Probable 2-(5''-triphosphoribosyl)-3'-dephosphocoenzyme-A synthase (298 aa).

It belongs to the CitG/MdcB family.

It catalyses the reaction 3'-dephospho-CoA + ATP = 2'-(5''-triphospho-alpha-D-ribosyl)-3'-dephospho-CoA + adenine. In Salmonella arizonae (strain ATCC BAA-731 / CDC346-86 / RSK2980), this protein is Probable 2-(5''-triphosphoribosyl)-3'-dephosphocoenzyme-A synthase.